A 1249-amino-acid polypeptide reads, in one-letter code: Hyphally regulated cell wall protein 3 (1249 aa).

Positions 1-20 are cleaved as a signal peptide; sequence MHLFKRIALTLWLIISSTLA. An N-linked (GlcNAc...) asparagine glycan is attached at Asn-373. The segment covering 383 to 415 has biased composition (low complexity); the sequence is FPTTSQSSSSETVASSSQPDSSSTEPSAFPSST. 2 disordered regions span residues 383–729 and 883–1217; these read FPTT…SGII and GLST…SSAS. The span at 416 to 428 shows a compositional bias: polar residues; the sequence is GDSSAEPSITSDY. Positions 429–716 are enriched in low complexity; the sequence is SSSELSVVPS…SEYTATWTTT (288 aa). An N-linked (GlcNAc...) asparagine glycan is attached at Asn-681. 2 stretches are compositionally biased toward polar residues: residues 717-729 and 883-935; these read NSDG…SGII and GLST…PVPT. N-linked (GlcNAc...) asparagine glycans are attached at residues Asn-891, Asn-940, Asn-944, Asn-948, Asn-952, Asn-956, Asn-960, Asn-966, Asn-970, Asn-974, Asn-984, Asn-988, Asn-992, Asn-996, Asn-1000, Asn-1010, Asn-1014, Asn-1018, Asn-1022, Asn-1026, Asn-1032, Asn-1046, Asn-1050, Asn-1058, Asn-1062, Asn-1072, Asn-1076, Asn-1080, Asn-1086, Asn-1090, Asn-1094, Asn-1098, Asn-1114, Asn-1118, Asn-1122, Asn-1128, Asn-1132, Asn-1136, Asn-1140, Asn-1150, Asn-1154, Asn-1158, Asn-1172, Asn-1180, and Asn-1186. A compositionally biased stretch (low complexity) spans 941-959; that stretch reads GSNNGSDNGSNNGSNNGSN. The span at 960–982 shows a compositional bias: gly residues; it reads NGSGSGNGSNNGSNNGSGSGNGF. A compositionally biased stretch (low complexity) spans 983-1043; the sequence is NNGSDNGSNN…SNSGSDSGNG (61 aa). The span at 1062-1078 shows a compositional bias: gly residues; it reads NGSGSGGESNNGSGNGS. A compositionally biased stretch (low complexity) spans 1079-1097; it reads DNGSSPDNGSNNGSNNGSN. The segment covering 1139-1167 has biased composition (low complexity); the sequence is NNGSNSGSNSDNGSNNSSGNGSSSDLGSV. Low complexity-rich tracts occupy residues 1175–1194 and 1205–1217; these read NEGS…GAGA and SPSA…SSAS. A glycan (N-linked (GlcNAc...) asparagine) is linked at Asn-1225. The GPI-anchor amidated asparagine moiety is linked to residue Asn-1225. Positions 1226 to 1249 are cleaved as a propeptide — removed in mature form; that stretch reads GSGKLLNGKVLTLSVLSSMVVVFL.

Belongs to the HYR1/IFF family. The GPI-anchor is attached to the protein in the endoplasmic reticulum and serves to target the protein to the cell surface. There, the glucosamine-inositol phospholipid moiety is cleaved off and the GPI-modified mannoprotein is covalently attached via its lipidless GPI glycan remnant to the 1,6-beta-glucan of the outer cell wall layer.

It localises to the secreted. The protein localises to the cell wall. Its subcellular location is the membrane. Its function is as follows. GPI-anchored cell wall protein involved in cell wall organization, hyphal growth, as well as in host-fungal interaction and virulence. This chain is Hyphally regulated cell wall protein 3 (HYR3), found in Candida albicans (strain SC5314 / ATCC MYA-2876) (Yeast).